We begin with the raw amino-acid sequence, 308 residues long: Aspartate carbamoyltransferase catalytic subunit (308 aa).

Positions 57 and 58 each coordinate carbamoyl phosphate. K86 is a binding site for L-aspartate. R107, H135, and Q138 together coordinate carbamoyl phosphate. Residues R167 and R228 each contribute to the L-aspartate site. Carbamoyl phosphate-binding residues include L267 and P268.

This sequence belongs to the aspartate/ornithine carbamoyltransferase superfamily. ATCase family. As to quaternary structure, heterooligomer of catalytic and regulatory chains.

The catalysed reaction is carbamoyl phosphate + L-aspartate = N-carbamoyl-L-aspartate + phosphate + H(+). It participates in pyrimidine metabolism; UMP biosynthesis via de novo pathway; (S)-dihydroorotate from bicarbonate: step 2/3. Its function is as follows. Catalyzes the condensation of carbamoyl phosphate and aspartate to form carbamoyl aspartate and inorganic phosphate, the committed step in the de novo pyrimidine nucleotide biosynthesis pathway. This Methanococcoides burtonii (strain DSM 6242 / NBRC 107633 / OCM 468 / ACE-M) protein is Aspartate carbamoyltransferase catalytic subunit.